Reading from the N-terminus, the 669-residue chain is Elongation factor G-like protein (669 aa).

The tr-type G domain maps to 7 to 279; sequence ESLRNVAIVG…VLIKEAPDPS (273 aa). Residues 16–23 are G1; that stretch reads GPYGSGKT. 16-23 is a binding site for GTP; that stretch reads GPYGSGKT. A G2 region spans residues 59 to 63; sequence QMSVE. The tract at residues 80-83 is G3; the sequence is DCPG. GTP contacts are provided by residues 80-84 and 134-137; these read DCPGS and NKMD. The tract at residues 134-137 is G4; that stretch reads NKMD. The tract at residues 257-259 is G5; it reads AAE.

It belongs to the TRAFAC class translation factor GTPase superfamily. Classic translation factor GTPase family. EF-G/EF-2 subfamily.

In Synechocystis sp. (strain ATCC 27184 / PCC 6803 / Kazusa), this protein is Elongation factor G-like protein.